Reading from the N-terminus, the 211-residue chain is Thiamine-phosphate synthase (211 aa).

4-amino-2-methyl-5-(diphosphooxymethyl)pyrimidine is bound by residues glutamine 37–lysine 41 and asparagine 69. Mg(2+) contacts are provided by aspartate 70 and aspartate 89. Serine 108 is a binding site for 4-amino-2-methyl-5-(diphosphooxymethyl)pyrimidine. Threonine 134 to threonine 136 serves as a coordination point for 2-[(2R,5Z)-2-carboxy-4-methylthiazol-5(2H)-ylidene]ethyl phosphate. A 4-amino-2-methyl-5-(diphosphooxymethyl)pyrimidine-binding site is contributed by lysine 137. 2-[(2R,5Z)-2-carboxy-4-methylthiazol-5(2H)-ylidene]ethyl phosphate is bound by residues glycine 166 and valine 186–serine 187.

Belongs to the thiamine-phosphate synthase family. Mg(2+) is required as a cofactor.

It carries out the reaction 2-[(2R,5Z)-2-carboxy-4-methylthiazol-5(2H)-ylidene]ethyl phosphate + 4-amino-2-methyl-5-(diphosphooxymethyl)pyrimidine + 2 H(+) = thiamine phosphate + CO2 + diphosphate. It catalyses the reaction 2-(2-carboxy-4-methylthiazol-5-yl)ethyl phosphate + 4-amino-2-methyl-5-(diphosphooxymethyl)pyrimidine + 2 H(+) = thiamine phosphate + CO2 + diphosphate. The enzyme catalyses 4-methyl-5-(2-phosphooxyethyl)-thiazole + 4-amino-2-methyl-5-(diphosphooxymethyl)pyrimidine + H(+) = thiamine phosphate + diphosphate. It functions in the pathway cofactor biosynthesis; thiamine diphosphate biosynthesis; thiamine phosphate from 4-amino-2-methyl-5-diphosphomethylpyrimidine and 4-methyl-5-(2-phosphoethyl)-thiazole: step 1/1. Functionally, condenses 4-methyl-5-(beta-hydroxyethyl)thiazole monophosphate (THZ-P) and 2-methyl-4-amino-5-hydroxymethyl pyrimidine pyrophosphate (HMP-PP) to form thiamine monophosphate (TMP). The polypeptide is Thiamine-phosphate synthase (Salmonella typhimurium (strain LT2 / SGSC1412 / ATCC 700720)).